The sequence spans 491 residues: Probable V-type proton ATPase subunit B 1 (491 aa).

Arginine 380 lines the ATP pocket.

The protein belongs to the ATPase alpha/beta chains family. V-ATPase is a heteromultimeric enzyme made up of two complexes: the ATP-hydrolytic V1 complex and the proton translocation V0 complex. The V1 complex consists of three catalytic AB heterodimers that form a heterohexamer, three peripheral stalks each consisting of EG heterodimers, one central rotor including subunits D and F, and the regulatory subunits C and H. The proton translocation complex V0 consists of the proton transport subunit a, a ring of proteolipid subunits c9c'', rotary subunit d, subunits e and f, and the accessory subunits vah-19/Ac45 and vah-20/PRR.

Its function is as follows. Non-catalytic subunit of the V1 complex of vacuolar(H+)-ATPase (V-ATPase), a multisubunit enzyme composed of a peripheral complex (V1) that hydrolyzes ATP and a membrane integral complex (V0) that translocates protons. V-ATPase is responsible for acidifying and maintaining the pH of intracellular compartments and in some cell types, is targeted to the plasma membrane, where it is responsible for acidifying the extracellular environment. Essential for the proper assembly and activity of V-ATPase. Required maternally for early embryogenesis and zygotically during morphogenesis. Specifically, involved in the clearance of apoptotic cell corpses in embryos. Also, during embryonic development, the V-ATPase is required to repress fusion of epidermal cells probably by negatively regulating eff-1-mediated cell fusion. In neurons, required for necrotic cell death by promoting intracellular acidification. Required for cell death induced by hypoxia. Required for acidification of synaptic vesicles and the release of neurotransmitters from adult neurons. In Caenorhabditis briggsae, this protein is Probable V-type proton ATPase subunit B 1.